Reading from the N-terminus, the 339-residue chain is Isopentenyl-diphosphate delta-isomerase (339 aa).

Substrate is bound at residue 7–8 (RK). FMN contacts are provided by residues serine 65, 66–68 (SMT), serine 96, and asparagine 125. A substrate-binding site is contributed by 96–98 (SQR). Glutamine 160 lines the substrate pocket. Position 161 (glutamate 161) interacts with Mg(2+). FMN is bound by residues lysine 192, threonine 222, and 293-294 (AG).

This sequence belongs to the IPP isomerase type 2 family. In terms of assembly, homooctamer. Dimer of tetramers. FMN serves as cofactor. It depends on NADPH as a cofactor. Mg(2+) is required as a cofactor.

It localises to the cytoplasm. The enzyme catalyses isopentenyl diphosphate = dimethylallyl diphosphate. Functionally, involved in the biosynthesis of isoprenoids. Catalyzes the 1,3-allylic rearrangement of the homoallylic substrate isopentenyl (IPP) to its allylic isomer, dimethylallyl diphosphate (DMAPP). The sequence is that of Isopentenyl-diphosphate delta-isomerase from Vibrio parahaemolyticus serotype O3:K6 (strain RIMD 2210633).